We begin with the raw amino-acid sequence, 833 residues long: DNA helicase MCM8 (833 aa).

Residues 395–602 (LLKLVVNSLC…QHDHLLSEHV (208 aa)) form the MCM domain. 447–454 (GDPGLGKS) provides a ligand contact to ATP. At S623 the chain carries Phosphoserine.

The protein belongs to the MCM family. In terms of assembly, component of the MCM8-MCM9 complex, which forms a hexamer composed of MCM8 and MCM9. Interacts with the DNA mismatch repair (MMR) complex composed at least of MSH2, MSH3, MSH6, PMS1 and MLH1. Interacts with RAD51; the interaction recruits RAD51 to DNA damage sites. Interacts with the MRN complex composed of MRE11, RAD50 and NBN/NBS1. Interacts with CDC6 and ORC2. Interacts with HROB; the interaction recruits the MCM8-MCM9 complex to DNA damage sites.

The protein localises to the nucleus. It is found in the chromosome. The enzyme catalyses ATP + H2O = ADP + phosphate + H(+). Functionally, component of the MCM8-MCM9 complex, a complex involved in the repair of double-stranded DNA breaks (DBSs) and DNA interstrand cross-links (ICLs) by homologous recombination (HR). Required for DNA resection by the MRE11-RAD50-NBN/NBS1 (MRN) complex by recruiting the MRN complex to the repair site and by promoting the complex nuclease activity. Probably by regulating the localization of the MNR complex, indirectly regulates the recruitment of downstream effector RAD51 to DNA damage sites including DBSs and ICLs. The MCM8-MCM9 complex is dispensable for DNA replication and S phase progression. However, may play a non-essential for DNA replication: may be involved in the activation of the prereplicative complex (pre-RC) during G(1) phase by recruiting CDC6 to the origin recognition complex (ORC). Probably by regulating HR, plays a key role during gametogenesis. Stabilizes MCM9 protein. The polypeptide is DNA helicase MCM8 (Mcm8) (Mus musculus (Mouse)).